A 536-amino-acid chain; its full sequence is Apoptosis inhibitor 5 homolog (536 aa).

The disordered stretch occupies residues 462 to 536 (ITFGEKAAAN…GYRNRRFNKY (75 aa)). Residues 472–487 (GKDKDQEPEKKSRPSN) are compositionally biased toward basic and acidic residues. Residues 498-507 (KYSNKVNQSY) show a composition bias toward polar residues. Positions 516–528 (RGGGGGGGSGGGY) are enriched in gly residues.

The protein belongs to the API5 family.

The protein localises to the nucleus. Functionally, antiapoptotic factor. Also known to efficiently suppress E2F1-induced apoptosis. This is Apoptosis inhibitor 5 homolog from Drosophila melanogaster (Fruit fly).